The primary structure comprises 464 residues: GTPase Der (464 aa).

EngA-type G domains are found at residues 3-166 (PTIA…AVES) and 177-350 (LKMA…QAAT). GTP is bound by residues 9–16 (GRPNVGKS), 56–60 (DTGGI), 118–121 (NKVD), 183–190 (GRPNVGKS), 230–234 (DTAGV), and 295–298 (NKWD). Positions 351–435 (EKYSTSFLTR…PVRIEYRSGD (85 aa)) constitute a KH-like domain.

This sequence belongs to the TRAFAC class TrmE-Era-EngA-EngB-Septin-like GTPase superfamily. EngA (Der) GTPase family. As to quaternary structure, associates with the 50S ribosomal subunit.

Its function is as follows. GTPase that plays an essential role in the late steps of ribosome biogenesis. The sequence is that of GTPase Der from Teredinibacter turnerae (strain ATCC 39867 / T7901).